The primary structure comprises 72 residues: Osmotically-inducible lipoprotein B (72 aa).

The first 23 residues, 1 to 23, serve as a signal peptide directing secretion; it reads MFVTSKKMTAAVLAITLAMSLSA. Cysteine 24 carries the N-palmitoyl cysteine lipid modification. Cysteine 24 carries S-diacylglycerol cysteine lipidation.

It localises to the cell membrane. Functionally, provides resistance to osmotic stress. May be important for stationary-phase survival. This Escherichia coli O157:H7 protein is Osmotically-inducible lipoprotein B (osmB).